The primary structure comprises 245 residues: Biosynthetic peptidoglycan transglycosylase (245 aa).

A helical membrane pass occupies residues 13–35 (VGLARWIVYAGSVFAGAWLATQL).

Belongs to the glycosyltransferase 51 family.

It localises to the cell inner membrane. It catalyses the reaction [GlcNAc-(1-&gt;4)-Mur2Ac(oyl-L-Ala-gamma-D-Glu-L-Lys-D-Ala-D-Ala)](n)-di-trans,octa-cis-undecaprenyl diphosphate + beta-D-GlcNAc-(1-&gt;4)-Mur2Ac(oyl-L-Ala-gamma-D-Glu-L-Lys-D-Ala-D-Ala)-di-trans,octa-cis-undecaprenyl diphosphate = [GlcNAc-(1-&gt;4)-Mur2Ac(oyl-L-Ala-gamma-D-Glu-L-Lys-D-Ala-D-Ala)](n+1)-di-trans,octa-cis-undecaprenyl diphosphate + di-trans,octa-cis-undecaprenyl diphosphate + H(+). Its pathway is cell wall biogenesis; peptidoglycan biosynthesis. Peptidoglycan polymerase that catalyzes glycan chain elongation from lipid-linked precursors. The protein is Biosynthetic peptidoglycan transglycosylase of Burkholderia vietnamiensis (strain G4 / LMG 22486) (Burkholderia cepacia (strain R1808)).